Reading from the N-terminus, the 261-residue chain is 2,3-dihydro-2,3-dihydroxybenzoate dehydrogenase (261 aa).

12 to 36 (FITGAAQGIGEAVARTLASQGAHIA) contributes to the NAD(+) binding site. S144 contributes to the substrate binding site. The active-site Proton acceptor is the Y157.

It belongs to the short-chain dehydrogenases/reductases (SDR) family.

It is found in the cytoplasm. It catalyses the reaction (2S,3S)-2,3-dihydroxy-2,3-dihydrobenzoate + NAD(+) = 2,3-dihydroxybenzoate + NADH + H(+). Its pathway is siderophore biosynthesis; bacillibactin biosynthesis. This Bacillus subtilis (strain 168) protein is 2,3-dihydro-2,3-dihydroxybenzoate dehydrogenase (dhbA).